Consider the following 177-residue polypeptide: Large ribosomal subunit protein uL16 (177 aa).

Belongs to the universal ribosomal protein uL16 family.

This is Large ribosomal subunit protein uL16 from Natronomonas pharaonis (strain ATCC 35678 / DSM 2160 / CIP 103997 / JCM 8858 / NBRC 14720 / NCIMB 2260 / Gabara) (Halobacterium pharaonis).